We begin with the raw amino-acid sequence, 490 residues long: ATP synthase subunit beta, chloroplastic (490 aa).

Residue 170–177 participates in ATP binding; that stretch reads GGAGVGKT.

The protein belongs to the ATPase alpha/beta chains family. As to quaternary structure, F-type ATPases have 2 components, CF(1) - the catalytic core - and CF(0) - the membrane proton channel. CF(1) has five subunits: alpha(3), beta(3), gamma(1), delta(1), epsilon(1). CF(0) has four main subunits: a(1), b(1), b'(1) and c(9-12).

It localises to the plastid. The protein localises to the chloroplast thylakoid membrane. The enzyme catalyses ATP + H2O + 4 H(+)(in) = ADP + phosphate + 5 H(+)(out). Produces ATP from ADP in the presence of a proton gradient across the membrane. The catalytic sites are hosted primarily by the beta subunits. This is ATP synthase subunit beta, chloroplastic from Ipomoea obscura (Obscure morning glory).